A 485-amino-acid polypeptide reads, in one-letter code: D-alanine--D-alanyl carrier protein ligase (485 aa).

ATP is bound at residue 144-145; sequence TS. D-alanine is bound at residue Asp-189. 284–289 contributes to the ATP binding site; it reads NTYGPT. Residue Val-293 participates in D-alanine binding. Asp-365 and Lys-473 together coordinate ATP. Position 473 (Lys-473) interacts with D-alanine.

The protein belongs to the ATP-dependent AMP-binding enzyme family. DltA subfamily.

Its subcellular location is the cytoplasm. The enzyme catalyses holo-[D-alanyl-carrier protein] + D-alanine + ATP = D-alanyl-[D-alanyl-carrier protein] + AMP + diphosphate. It functions in the pathway cell wall biogenesis; lipoteichoic acid biosynthesis. Catalyzes the first step in the D-alanylation of lipoteichoic acid (LTA), the activation of D-alanine and its transfer onto the D-alanyl carrier protein (Dcp) DltC. In an ATP-dependent two-step reaction, forms a high energy D-alanyl-AMP intermediate, followed by transfer of the D-alanyl residue as a thiol ester to the phosphopantheinyl prosthetic group of the Dcp. D-alanylation of LTA plays an important role in modulating the properties of the cell wall in Gram-positive bacteria, influencing the net charge of the cell wall. This chain is D-alanine--D-alanyl carrier protein ligase, found in Staphylococcus aureus (strain MRSA252).